Consider the following 369-residue polypeptide: Anhydro-N-acetylmuramic acid kinase (369 aa).

Position 12-19 (12-19) interacts with ATP; it reads GTSMDGID.

The protein belongs to the anhydro-N-acetylmuramic acid kinase family.

It carries out the reaction 1,6-anhydro-N-acetyl-beta-muramate + ATP + H2O = N-acetyl-D-muramate 6-phosphate + ADP + H(+). It functions in the pathway amino-sugar metabolism; 1,6-anhydro-N-acetylmuramate degradation. The protein operates within cell wall biogenesis; peptidoglycan recycling. Its function is as follows. Catalyzes the specific phosphorylation of 1,6-anhydro-N-acetylmuramic acid (anhMurNAc) with the simultaneous cleavage of the 1,6-anhydro ring, generating MurNAc-6-P. Is required for the utilization of anhMurNAc either imported from the medium or derived from its own cell wall murein, and thus plays a role in cell wall recycling. The sequence is that of Anhydro-N-acetylmuramic acid kinase from Shewanella sediminis (strain HAW-EB3).